A 406-amino-acid polypeptide reads, in one-letter code: MNETPKPNSFRSGPDEDGRFGIYGGRFVAETLMPLILDLQDEWNRAKNDPAFQAELKHLGAHYIGRPSPLYFAERLTAELGGAKIYFKREELNHTGSHKINNCIGQILLAKRMGKTRIIAETGAGQHGVASATVAARFGLPCVVYMGATDVERQAPNVFRMKLLGAEVKPVTAGSGTLKDAMNEALRDWVTNVEDTYYLIGTAAGPHPYPEMVRDFQSVIGIEAKEQMLAAEGRLPDLVIAAVGGGSNAIGIFHPFLDDPSVKIVGVEAGGKGLQGDEHCASITAGSPGVLHGNRTYLLQDSDGQIKEGHSISAGLDYPGIGPEHSWLNDTGRVDYVPIMDHEALEAFQTLTRLEGIIPALEPSHAIAEVIKRAPTMGKDEIILMNLSGRGDKDIFTVGKILGMGL.

N6-(pyridoxal phosphate)lysine is present on Lys99.

Belongs to the TrpB family. Tetramer of two alpha and two beta chains. Pyridoxal 5'-phosphate is required as a cofactor.

The catalysed reaction is (1S,2R)-1-C-(indol-3-yl)glycerol 3-phosphate + L-serine = D-glyceraldehyde 3-phosphate + L-tryptophan + H2O. It functions in the pathway amino-acid biosynthesis; L-tryptophan biosynthesis; L-tryptophan from chorismate: step 5/5. Functionally, the beta subunit is responsible for the synthesis of L-tryptophan from indole and L-serine. The sequence is that of Tryptophan synthase beta chain from Rhizobium johnstonii (strain DSM 114642 / LMG 32736 / 3841) (Rhizobium leguminosarum bv. viciae).